A 481-amino-acid chain; its full sequence is Cytochrome P450 monooxygenase dpfgJ (481 aa).

Residues 23-43 traverse the membrane as a helical segment; it reads LVFTQAAVIGSILFVFLLGLY. Residue asparagine 338 is glycosylated (N-linked (GlcNAc...) asparagine). Heme is bound at residue cysteine 427.

This sequence belongs to the cytochrome P450 family. The cofactor is heme.

The protein resides in the membrane. It participates in secondary metabolite biosynthesis; terpenoid biosynthesis. Its function is as follows. Cytochrome P450 monooxygenase; part of the gene cluster that mediates the biosynthesis of diterpenoid pyrones. The first step of the pathway is the synthesis of the alpha-pyrone moiety by the polyketide synthase dpfgA via condensation of one acetyl-CoA starter unit with 3 malonyl-CoA units and 2 methylations. The alpha-pyrone is then combined with geranylgeranyl pyrophosphate (GGPP) formed by the GGPP synthase dpfgD through the action of the prenyltransferase dpfgC to yield a linear alpha-pyrone diterpenoid. Subsequent steps in the diterpenoid pyrone biosynthetic pathway involve the decalin core formation, which is initiated by the epoxidation of the C10-C11 olefin by the FAD-dependent oxidoreductase dpfgE, and is followed by a cyclization cascade catalyzed by the terpene cyclase dpfgB. The short chain dehydrogenase/reductase dpfgG then oxidizes the 8S hydroxy group to a ketone and the short chain dehydrogenase/reductase dpfgH reduces the ketone to the 8R hydroxy group to yield higginsianin B. Higginsianin B is further methylated by the methyltransferase dpfgI to produce the intermediate named FDDP B. The cytochrome P450 monooxygenase dfgpJ then catalyzes a three-step oxidation at C-27 to generate a carboxylic acid as well as C-26 hydroxylation. Finally, methyltransferase dpfgK methylates the carboxylic acid generated by dpfgJ, yielding the final diterpenoid pyrones from the pathway which were named FDDP D and FDDP E. The polypeptide is Cytochrome P450 monooxygenase dpfgJ (Gibberella zeae (strain ATCC MYA-4620 / CBS 123657 / FGSC 9075 / NRRL 31084 / PH-1) (Wheat head blight fungus)).